We begin with the raw amino-acid sequence, 1403 residues long: Mannuronan C5-epimerase AlgE1 (1403 aa).

7 PbH1 repeats span residues 133–155 (DRDV…DPHE), 157–179 (TINL…VADY), 180–202 (QVGG…NIVT), 204–226 (TNDF…VVQR), 257–279 (AHDV…RVYG), 280–302 (AQDV…YAEV), and 320–359 (TTGT…SIDG). Disordered stretches follow at residues 372–395 (STVS…NDAL) and 408–428 (AGDD…GAGR). Hemolysin-type calcium-binding repeat units lie at residues 388-403 (GSAG…AHET), 406-422 (GQAG…NDIL), 424-440 (GGAG…ADTF), 557-573 (GYGG…DDIL), 574-591 (VGGA…ADVF), 697-712 (EGTD…EANE), 716-732 (GLDG…DDIL), and 734-750 (GGAG…ADTF). PbH1 repeat units lie at residues 977–999 (DRNV…DPHE), 1001–1023 (TINL…VADY), 1024–1046 (LVDS…NIVT), 1048–1070 (TYDF…TIQR), 1101–1123 (TNNV…RLYG), 1124–1146 (TEDV…YPEV), 1163–1185 (TLNT…AVRE), and 1190–1212 (SDYT…QLSG). Hemolysin-type calcium-binding repeat units follow at residues 1227–1243 (GTDG…NDQL), 1244–1261 (YGGA…DDLL), and 1263–1279 (GGAG…ADTF).

Belongs to the D-mannuronate C5-epimerase family. The cofactor is Ca(2+).

Its subcellular location is the secreted. The enzyme catalyses [(1-&gt;4)-beta-D-mannuronosyl](n) = [alginate](n). Its pathway is glycan biosynthesis; alginate biosynthesis. Inhibited by zinc. Its function is as follows. Converts beta-D-mannuronic acid (M) to alpha-L-guluronic acid (G), producing a polymer with gel-forming capacity, required for the formation of the cyst coat. This Azotobacter vinelandii protein is Mannuronan C5-epimerase AlgE1.